A 189-amino-acid polypeptide reads, in one-letter code: dCTP deaminase (189 aa).

DCTP is bound by residues 112–117 (KSTYAR), 136–138 (TLE), Gln-157, Tyr-171, and Gln-181. The active-site Proton donor/acceptor is the Glu-138.

Belongs to the dCTP deaminase family. As to quaternary structure, homotrimer.

The catalysed reaction is dCTP + H2O + H(+) = dUTP + NH4(+). It functions in the pathway pyrimidine metabolism; dUMP biosynthesis; dUMP from dCTP (dUTP route): step 1/2. Catalyzes the deamination of dCTP to dUTP. This Xanthomonas axonopodis pv. citri (strain 306) protein is dCTP deaminase.